The primary structure comprises 328 residues: GMP reductase (328 aa).

Residue Cys176 is the Thioimidate intermediate of the active site. Residue 205 to 228 coordinates NADP(+); that stretch reads IIADGGIRTHGDVAKSIRFGATMV.

This sequence belongs to the IMPDH/GMPR family. GuaC type 2 subfamily.

It carries out the reaction IMP + NH4(+) + NADP(+) = GMP + NADPH + 2 H(+). In terms of biological role, catalyzes the irreversible NADPH-dependent deamination of GMP to IMP. It functions in the conversion of nucleobase, nucleoside and nucleotide derivatives of G to A nucleotides, and in maintaining the intracellular balance of A and G nucleotides. The sequence is that of GMP reductase from Bacillus thuringiensis (strain Al Hakam).